The chain runs to 68 residues: Wasabi receptor toxin (68 aa).

An N-terminal signal peptide occupies residues 1–21 (MKYFTLALTLLFLLLINPCKD). Positions 22-35 (MNFAWAESSEKVER) are excised as a propeptide. Disulfide bonds link cysteine 44-cysteine 62 and cysteine 48-cysteine 58.

This sequence belongs to the short scorpion toxin superfamily. Potassium channel inhibitor kappa-KTx family. Kappa-KTx 1 subfamily. In terms of assembly, monomer. Expressed by the venom gland.

The protein localises to the secreted. Its subcellular location is the host cytoplasm. In terms of biological role, cell-penetrating peptide (CPP) with defensive purpose that induces pain by specifically activating mammalian sensory neuron TRPA1 channels. It non-covalently binds to the same region than other TRPA1 agonists (irritants), but acts via a distinct biochemical mechanism. Its binding stabilizes the TRPA1 open state and diminishes calcium-permeability. Consequently, it produces pain and pain hypersensitivity, but fails to trigger efferent release of neuropeptides (CGRP) and neurogenic inflammation typically produced by noxious electrophiles. Is not active on voltage-gated potassium channels and other TRP channels. This is Wasabi receptor toxin from Urodacus manicatus (Black rock scorpion).